Reading from the N-terminus, the 335-residue chain is tRNA N6-adenosine threonylcarbamoyltransferase (335 aa).

Residues His111 and His115 each contribute to the Fe cation site. Residues 133 to 137 (IISGG), Asp166, Gly179, Asp183, and Asn268 contribute to the substrate site. Residue Asp296 participates in Fe cation binding.

It belongs to the KAE1 / TsaD family. Requires Fe(2+) as cofactor.

It localises to the cytoplasm. It catalyses the reaction L-threonylcarbamoyladenylate + adenosine(37) in tRNA = N(6)-L-threonylcarbamoyladenosine(37) in tRNA + AMP + H(+). Functionally, required for the formation of a threonylcarbamoyl group on adenosine at position 37 (t(6)A37) in tRNAs that read codons beginning with adenine. Is involved in the transfer of the threonylcarbamoyl moiety of threonylcarbamoyl-AMP (TC-AMP) to the N6 group of A37, together with TsaE and TsaB. TsaD likely plays a direct catalytic role in this reaction. This is tRNA N6-adenosine threonylcarbamoyltransferase from Aquifex aeolicus (strain VF5).